The primary structure comprises 183 residues: UPF0340 protein LCA_1354 (183 aa).

It belongs to the UPF0340 family.

The sequence is that of UPF0340 protein LCA_1354 from Latilactobacillus sakei subsp. sakei (strain 23K) (Lactobacillus sakei subsp. sakei).